Reading from the N-terminus, the 123-residue chain is Small ribosomal subunit protein uS12 (123 aa).

Asp89 is subject to 3-methylthioaspartic acid.

Belongs to the universal ribosomal protein uS12 family. In terms of assembly, part of the 30S ribosomal subunit. Contacts proteins S8 and S17. May interact with IF1 in the 30S initiation complex.

With S4 and S5 plays an important role in translational accuracy. Functionally, interacts with and stabilizes bases of the 16S rRNA that are involved in tRNA selection in the A site and with the mRNA backbone. Located at the interface of the 30S and 50S subunits, it traverses the body of the 30S subunit contacting proteins on the other side and probably holding the rRNA structure together. The combined cluster of proteins S8, S12 and S17 appears to hold together the shoulder and platform of the 30S subunit. The chain is Small ribosomal subunit protein uS12 from Citrifermentans bemidjiense (strain ATCC BAA-1014 / DSM 16622 / JCM 12645 / Bem) (Geobacter bemidjiensis).